The primary structure comprises 257 residues: Diaminopimelate epimerase (257 aa).

The substrate site is built by Asn6 and Asn57. Cys66 (proton donor) is an active-site residue. Residues 67–68 (GN), Asn170, and 188–189 (ER) contribute to the substrate site. Cys198 serves as the catalytic Proton acceptor. 199–200 (GT) lines the substrate pocket.

The protein belongs to the diaminopimelate epimerase family. As to quaternary structure, homodimer.

It localises to the cytoplasm. It catalyses the reaction (2S,6S)-2,6-diaminopimelate = meso-2,6-diaminopimelate. The protein operates within amino-acid biosynthesis; L-lysine biosynthesis via DAP pathway; DL-2,6-diaminopimelate from LL-2,6-diaminopimelate: step 1/1. Its function is as follows. Catalyzes the stereoinversion of LL-2,6-diaminopimelate (L,L-DAP) to meso-diaminopimelate (meso-DAP), a precursor of L-lysine and an essential component of the bacterial peptidoglycan. This chain is Diaminopimelate epimerase, found in Chlorobaculum tepidum (strain ATCC 49652 / DSM 12025 / NBRC 103806 / TLS) (Chlorobium tepidum).